The primary structure comprises 148 residues: Large ribosomal subunit protein uL15A (148 aa).

Basic residues-rich tracts occupy residues 1-13 and 21-31; these read MPTH…KLRG and RIGKHRKHPGG. Residues 1–36 form a disordered region; the sequence is MPTHVSKTRKLRGHVSAGHGRIGKHRKHPGGRGKAG.

It belongs to the universal ribosomal protein uL15 family. In terms of assembly, component of the large ribosomal subunit (LSU). Mature yeast ribosomes consist of a small (40S) and a large (60S) subunit. The 40S small subunit contains 1 molecule of ribosomal RNA (18S rRNA) and at least 33 different proteins. The large 60S subunit contains 3 rRNA molecules (25S, 5.8S and 5S rRNA) and at least 46 different proteins.

It is found in the cytoplasm. Its function is as follows. Component of the ribosome, a large ribonucleoprotein complex responsible for the synthesis of proteins in the cell. The small ribosomal subunit (SSU) binds messenger RNAs (mRNAs) and translates the encoded message by selecting cognate aminoacyl-transfer RNA (tRNA) molecules. The large subunit (LSU) contains the ribosomal catalytic site termed the peptidyl transferase center (PTC), which catalyzes the formation of peptide bonds, thereby polymerizing the amino acids delivered by tRNAs into a polypeptide chain. The nascent polypeptides leave the ribosome through a tunnel in the LSU and interact with protein factors that function in enzymatic processing, targeting, and the membrane insertion of nascent chains at the exit of the ribosomal tunnel. The chain is Large ribosomal subunit protein uL15A (rpl2802) from Schizosaccharomyces pombe (strain 972 / ATCC 24843) (Fission yeast).